A 490-amino-acid polypeptide reads, in one-letter code: Betaine aldehyde dehydrogenase (490 aa).

Serine 26, isoleucine 27, and aspartate 93 together coordinate K(+). 150-152 (GAW) is a binding site for NAD(+). Lysine 162 functions as the Charge relay system in the catalytic mechanism. 176–179 (KPSE) contributes to the NAD(+) binding site. Residue valine 180 participates in K(+) binding. 230-233 (GTVT) is an NAD(+) binding site. Residue leucine 246 participates in K(+) binding. The active-site Proton acceptor is the glutamate 252. NAD(+)-binding residues include glycine 254, cysteine 286, and glutamate 387. Cysteine 286 functions as the Nucleophile in the catalytic mechanism. Cysteine 286 is modified (cysteine sulfenic acid (-SOH)). K(+) contacts are provided by lysine 457 and glycine 460. Glutamate 464 acts as the Charge relay system in catalysis.

The protein belongs to the aldehyde dehydrogenase family. Dimer of dimers. Requires K(+) as cofactor.

The catalysed reaction is betaine aldehyde + NAD(+) + H2O = glycine betaine + NADH + 2 H(+). It functions in the pathway amine and polyamine biosynthesis; betaine biosynthesis via choline pathway; betaine from betaine aldehyde: step 1/1. Involved in the biosynthesis of the osmoprotectant glycine betaine. Catalyzes the irreversible oxidation of betaine aldehyde to the corresponding acid. The protein is Betaine aldehyde dehydrogenase of Ectopseudomonas mendocina (strain ymp) (Pseudomonas mendocina).